Consider the following 195-residue polypeptide: Imidazoleglycerol-phosphate dehydratase (195 aa).

The protein belongs to the imidazoleglycerol-phosphate dehydratase family.

Its subcellular location is the cytoplasm. The enzyme catalyses D-erythro-1-(imidazol-4-yl)glycerol 3-phosphate = 3-(imidazol-4-yl)-2-oxopropyl phosphate + H2O. Its pathway is amino-acid biosynthesis; L-histidine biosynthesis; L-histidine from 5-phospho-alpha-D-ribose 1-diphosphate: step 6/9. The chain is Imidazoleglycerol-phosphate dehydratase from Polynucleobacter necessarius subsp. necessarius (strain STIR1).